The sequence spans 205 residues: Guanylate kinase (205 aa).

Residues 18 to 196 form the Guanylate kinase-like domain; that stretch reads PKLFTISAPA…AYQVLRSIFI (179 aa). 25–32 is an ATP binding site; it reads APAGAGKT.

It belongs to the guanylate kinase family.

Its subcellular location is the cytoplasm. The enzyme catalyses GMP + ATP = GDP + ADP. Its function is as follows. Essential for recycling GMP and indirectly, cGMP. The polypeptide is Guanylate kinase (gmk) (Chlamydia muridarum (strain MoPn / Nigg)).